The following is an 817-amino-acid chain: ABC transporter G family member STR (817 aa).

Residues 1 to 30 (MARLERDGTNKSLESLMDSHKPGGTTTNLN) form a disordered region. Topologically, residues 1-542 (MARLERDGTN…RTVLNVIRTP (542 aa)) are cytoplasmic. An ABC transporter domain is found at 43 to 294 (LEFTNLSYSI…LSGFGRPVPD (252 aa)). 87–94 (GPSGAGKS) is an ATP binding site. Disordered stretches follow at residues 321 to 349 (QYQH…RRNT), 362 to 395 (GFTA…LERR), and 439 to 463 (RPPS…GPRS). Polar residues predominate over residues 362–375 (GFTAGTPQPDSSQF). Acidic residues predominate over residues 377–388 (LDDDDNDDDENF). A helical transmembrane segment spans residues 543 to 563 (ELFASREIVLTVMALVLSTIF). The Extracellular portion of the chain corresponds to 564-579 (KNLGDTTFIDINRLLN). The chain crosses the membrane as a helical span at residues 580-600 (FYIFAVCLVFFSSNDAVPSFI). At 601–621 (MERFIFIRETSHNAYRASSYV) the chain is on the cytoplasmic side. Residues 622-642 (ISSLIVYLPFFAVQGLTFAVI) traverse the membrane as a helical segment. The Extracellular portion of the chain corresponds to 643–657 (TKLMLHLKSNLFNFW). Residues 658–678 (MILFASLITTNAYVMLVSALV) form a helical membrane-spanning segment. Over 679 to 681 (PSY) the chain is Cytoplasmic. A helical membrane pass occupies residues 682–702 (ITGYAVVIATTALFFLTCGFF). Topologically, residues 703-787 (LKRTQIPAYW…TMDITMESLW (85 aa)) are extracellular. A glycan (N-linked (GlcNAc...) asparagine) is linked at Asn762. Residues 788–808 (YDILILLAWGVLYRFFFYLVL) traverse the membrane as a helical segment. The Cytoplasmic segment spans residues 809–817 (RFYSKNERK).

Belongs to the ABC transporter superfamily. ABCG family. Stunted arbuscule (STR) subfamily. Heterodimerizes with STR2; the resulting transporter is located in the peri-arbuscular membrane. In terms of tissue distribution, expressed constitutively in the vascular tissue of roots.

It is found in the cell membrane. Together with STR2, required for arbuscule development in arbuscular mycorrhizal (AM) symbiosis. This chain is ABC transporter G family member STR, found in Medicago truncatula (Barrel medic).